A 219-amino-acid polypeptide reads, in one-letter code: Large ribosomal subunit protein bL25 (219 aa).

The segment at 195-219 is disordered; sequence EETTTTETSNEPEVIKKGKKEEEEK. Residues 197-206 show a composition bias toward low complexity; sequence TTTTETSNEP. A compositionally biased stretch (basic and acidic residues) spans 207–219; that stretch reads EVIKKGKKEEEEK.

Belongs to the bacterial ribosomal protein bL25 family. CTC subfamily. In terms of assembly, part of the 50S ribosomal subunit; part of the 5S rRNA/L5/L18/L25 subcomplex. Contacts the 5S rRNA. Binds to the 5S rRNA independently of L5 and L18.

Functionally, this is one of the proteins that binds to the 5S RNA in the ribosome where it forms part of the central protuberance. In Fervidobacterium nodosum (strain ATCC 35602 / DSM 5306 / Rt17-B1), this protein is Large ribosomal subunit protein bL25.